A 367-amino-acid polypeptide reads, in one-letter code: MTRQIIPSSEFASLFLQARPLIDVRAPIEFTKGAFPSAINLPLMKDSEREKVGTCYKQQGQESAIKLGHALVSGTVKEQRIAAWRKAIEANPSSYLYCFRGGLRSQLSQQWIKEAGFDIPYIQGGYKALRTFLIQILESSAALNSMLILSGRTGSGKTDFLQLRDEAVDLEQLANHRGSSFGKNLDPQPSQINFENQLAIAVLQHQTKHHRHLLLEDESFLIGRSALPKAFYNSMQHADIVLLEEDDEQRLQRLLFDYVDNKLASFVSRLGDEAGLKAFGDYLNASLNGIKKRLGGKFLQELLDSVARALAHQISQNDTSLHLDWISQLLTRYYDPMYDYQLSQKQQRVLFKGDHASMHAWLDELRK.

One can recognise a Rhodanese domain in the interval 15–138 (FLQARPLIDV…LRTFLIQILE (124 aa)). Cys-98 functions as the S-selanylcysteine intermediate in the catalytic mechanism.

Belongs to the SelU family. In terms of assembly, monomer.

It catalyses the reaction 5-methylaminomethyl-2-thiouridine(34) in tRNA + selenophosphate + (2E)-geranyl diphosphate + H2O + H(+) = 5-methylaminomethyl-2-selenouridine(34) in tRNA + (2E)-thiogeraniol + phosphate + diphosphate. The catalysed reaction is 5-methylaminomethyl-2-thiouridine(34) in tRNA + (2E)-geranyl diphosphate = 5-methylaminomethyl-S-(2E)-geranyl-thiouridine(34) in tRNA + diphosphate. It carries out the reaction 5-methylaminomethyl-S-(2E)-geranyl-thiouridine(34) in tRNA + selenophosphate + H(+) = 5-methylaminomethyl-2-(Se-phospho)selenouridine(34) in tRNA + (2E)-thiogeraniol. The enzyme catalyses 5-methylaminomethyl-2-(Se-phospho)selenouridine(34) in tRNA + H2O = 5-methylaminomethyl-2-selenouridine(34) in tRNA + phosphate. Functionally, involved in the post-transcriptional modification of the uridine at the wobble position (U34) of tRNA(Lys), tRNA(Glu) and tRNA(Gln). Catalyzes the conversion of 2-thiouridine (S2U-RNA) to 2-selenouridine (Se2U-RNA). Acts in a two-step process involving geranylation of 2-thiouridine (S2U) to S-geranyl-2-thiouridine (geS2U) and subsequent selenation of the latter derivative to 2-selenouridine (Se2U) in the tRNA chain. This Shewanella denitrificans (strain OS217 / ATCC BAA-1090 / DSM 15013) protein is tRNA 2-selenouridine synthase.